A 218-amino-acid polypeptide reads, in one-letter code: Albicidin resistance protein (218 aa).

It is found in the periplasm. Functionally, albicidin resistance protein binds to form a complex without antibiotic activity but without catalyzing any further chemical modifications to albicidin. The protein is Albicidin resistance protein of Klebsiella oxytoca.